Consider the following 1038-residue polypeptide: Zinc finger protein 628 (1038 aa).

Positions 1-31 (MAGSHVDMAPASTTEGTGEKPGPTAPAPTPA) are disordered. Positions 13–22 (TTEGTGEKPG) are enriched in low complexity. 6 consecutive C2H2-type zinc fingers follow at residues 34–56 (YECG…QRTH), 62–84 (YKCP…QRGH), 90–112 (YQCP…RSVH), 118–140 (FTCG…LRQH), 146–168 (YPCP…RHVH), and 174–196 (YTCG…QRVH). Thr-197 carries the post-translational modification Phosphothreonine. The C2H2-type 7 zinc-finger motif lies at 202-224 (FRCPLCPKTFTHSSNLLLHHRTH). Disordered stretches follow at residues 220 to 242 (HHRT…ETSR) and 254 to 273 (LQPR…PPVV). Pro residues-rich tracts occupy residues 227–237 (APGPAPAPAPP) and 257–273 (RSPP…PPVV). 7 C2H2-type zinc fingers span residues 346–368 (FACL…QHSH), 376–398 (FRCG…QQCH), 446–468 (YKCA…LRDH), 474–496 (YQCG…QRVH), 502–524 (FTCG…LRLH), 530–552 (YACT…RHVH), and 558–580 (HSCS…QRVH). The residue at position 581 (Thr-581) is a Phosphothreonine. 2 C2H2-type zinc fingers span residues 586 to 608 (FRCP…QRTH) and 614 to 636 (FACP…LRTH). 2 disordered regions span residues 637–661 (TPAT…LAAA) and 717–763 (PSSV…AGQG). Residues 723 to 733 (PTPPPPPPPPK) are compositionally biased toward pro residues. Low complexity predominate over residues 734–756 (VILLPPASAGGPGSGAARPGPRS). 4 tandem repeats follow at residues 811–821 (VQLQPAQEVAT), 822–832 (VQLQPAQEVTT), 833–843 (VQLQPAQEVTT), and 844–854 (VQLQPLTGQVS). A 4 X 11 AA tandem repeats of VQLQP-[AL]-[QT]-[EG]-[VQ]-[ATV]-[ST] region spans residues 811–854 (VQLQPAQEVATVQLQPAQEVTTVQLQPAQEVTTVQLQPLTGQVS). Residues 922 to 1038 (DGEQTRLCVQ…LPAVQLVHTF (117 aa)) form an interaction with TAF4B region.

In terms of assembly, interacts with TAF4B. As to expression, expressed widely in testis, in both germline and somatic cells. Seems to have particularly strong expression in meiotic spermatocytes, postmeiotic round spermatids and Sertoli cells. Not detected in elongating spermatids or mature sperm (at protein level). Expressed in testis, ovary, spleen, lung, brain, liver and kidney. Expressed in D3 embryonic stem cells and F9 embryonal carcinoma cells.

It is found in the nucleus. Functionally, transcriptional activator. Binds DNA on GT-box consensus sequence 5'-TTGGTT-3'. Plays a role in spermiogenesis. The chain is Zinc finger protein 628 from Mus musculus (Mouse).